The chain runs to 91 residues: Small membrane A-kinase anchor protein (91 aa).

Gly-2 carries the N-myristoyl glycine lipid modification.

It belongs to the small membrane AKAP family. Post-translationally, may be palmitoylated at Cys-3.

Its subcellular location is the cell membrane. Its function is as follows. Binds to type I regulatory subunits of protein kinase A and may anchor/target them to the plasma membrane. The chain is Small membrane A-kinase anchor protein from Xenopus tropicalis (Western clawed frog).